Here is a 322-residue protein sequence, read N- to C-terminus: Putative heme-binding peroxidase (322 aa).

The active-site Proton acceptor is His38. A heme b-binding site is contributed by His162. The active-site Tryptophan radical intermediate is Trp178. The disordered stretch occupies residues 288–322; the sequence is ISAPKKSNHPTGPAKGAQGGCPVAASQGGCPRAKL.

Belongs to the peroxidase family. Cytochrome c peroxidase subfamily. Requires heme b as cofactor.

Destroys radicals which are normally produced within the cells and which are toxic to biological systems. The chain is Putative heme-binding peroxidase from Aspergillus fumigatus (strain ATCC MYA-4609 / CBS 101355 / FGSC A1100 / Af293) (Neosartorya fumigata).